Reading from the N-terminus, the 153-residue chain is Arachidonate 5-lipoxygenase-activating protein (153 aa).

The Lumenal portion of the chain corresponds to M1–N8. A helical transmembrane segment spans residues I9–V30. The Cytoplasmic portion of the chain corresponds to E31–R52. A helical transmembrane segment spans residues V53–L77. The Lumenal portion of the chain corresponds to C78–Q80. A helical membrane pass occupies residues V81–L102. Over G103 to Q107 the chain is Cytoplasmic. Residues S108–G115 lie within the membrane without spanning it. The helical transmembrane segment at K116 to A128 threads the bilayer. Over G129 to T153 the chain is Lumenal.

It belongs to the MAPEG family. Homotrimer. Interacts with LTC4S and ALOX5.

Its subcellular location is the nucleus membrane. The protein resides in the endoplasmic reticulum membrane. In terms of biological role, required for leukotriene biosynthesis by ALOX5 (5-lipoxygenase). Anchors ALOX5 to the membrane. Binds arachidonic acid, and could play an essential role in the transfer of arachidonic acid to ALOX5. Binds to MK-886, a compound that blocks the biosynthesis of leukotrienes. The chain is Arachidonate 5-lipoxygenase-activating protein (ALOX5AP) from Ovis aries (Sheep).